A 441-amino-acid polypeptide reads, in one-letter code: MQLNGIGKHSIRFLSDKASRFVPKGGVYPKGFMVGGIHCGVKKDGKSLDLAILTNTHGKSAVASAVFTTNKFKAAPVQVSSKIVKEKKGEEINSLVVNSGNANAVTGSQGMKDAQDMITVTDSALGNPTNSSLVMSTGVIGNNLPISKILSGIPQLAGGNLGNTHEDWLNCAQAICTTDTFPKLVSKSFELNGHTYTLAGLAKGAGMICPNMATLLGFFVTDAPVSASALDQILKFATDRSFNSISVDGDMSTNDTIVAIANGAAGGELIDNTASSAESFGILQREITGFAQQLAQLVVRDGEGATKFITISVKNALSYGDAKIIASSIANSSLFKTAMYGNDANWGRILCAIGYSQVSSGDSINPAKTNVSFIPSDGSSKLKLLVNGEPEVVDEKRASEILSVEDIEVEIDLGTGGGQECKFWTCDLTHEYITINGDYRS.

Substrate-binding residues include Thr177, Lys203, Thr214, Glu303, Asn436, and Ser441. The active-site Nucleophile is Thr214.

This sequence belongs to the ArgJ family. Heterodimer of an alpha and a beta chain. The alpha and beta chains are autoproteolytically processed from a single precursor protein within the mitochondrion.

The protein localises to the mitochondrion matrix. It catalyses the reaction N(2)-acetyl-L-ornithine + L-glutamate = N-acetyl-L-glutamate + L-ornithine. The enzyme catalyses L-glutamate + acetyl-CoA = N-acetyl-L-glutamate + CoA + H(+). It participates in amino-acid biosynthesis; L-arginine biosynthesis; L-ornithine and N-acetyl-L-glutamate from L-glutamate and N(2)-acetyl-L-ornithine (cyclic): step 1/1. Its pathway is amino-acid biosynthesis; L-arginine biosynthesis; N(2)-acetyl-L-ornithine from L-glutamate: step 1/4. Its function is as follows. Catalyzes two activities which are involved in the cyclic version of arginine biosynthesis: the synthesis of acetylglutamate from glutamate and acetyl-CoA, and of ornithine by transacetylation between acetylornithine and glutamate. This chain is Arginine biosynthesis bifunctional protein ArgJ, mitochondrial, found in Debaryomyces hansenii (strain ATCC 36239 / CBS 767 / BCRC 21394 / JCM 1990 / NBRC 0083 / IGC 2968) (Yeast).